The primary structure comprises 440 residues: Xylose isomerase (440 aa).

Catalysis depends on residues His101 and Asp104. The Mg(2+) site is built by Glu232, Glu268, His271, Asp296, Asp307, Asp309, and Asp339.

Belongs to the xylose isomerase family. Homotetramer. It depends on Mg(2+) as a cofactor.

The protein localises to the cytoplasm. The catalysed reaction is alpha-D-xylose = alpha-D-xylulofuranose. The chain is Xylose isomerase from Escherichia coli (strain SE11).